A 622-amino-acid chain; its full sequence is Modification methylase LlaI (622 aa).

Belongs to the N(4)/N(6)-methyltransferase family.

The enzyme catalyses a 2'-deoxyadenosine in DNA + S-adenosyl-L-methionine = an N(6)-methyl-2'-deoxyadenosine in DNA + S-adenosyl-L-homocysteine + H(+). Its function is as follows. An alpha subtype methylase that modifies unknown specific adenine residues, and protects the DNA from cleavage by the LlaI endonuclease. In Lactococcus lactis subsp. lactis (Streptococcus lactis), this protein is Modification methylase LlaI.